The following is a 20-amino-acid chain: Equinatoxin-1 (20 aa).

A plays an important role in the hemolytic activity region spans residues 3–12; the sequence is AVAGAVIEGA. Residues 11–20 form an N-terminal region region; that stretch reads GASLTFNVLQ.

The protein belongs to the actinoporin family. Sea anemone subfamily. In terms of assembly, octamer or nonamer in membranes. Monomer in the soluble state.

Its subcellular location is the secreted. It is found in the nematocyst. The protein localises to the target cell membrane. Its function is as follows. Pore-forming protein that forms cations-selective hydrophilic pores of around 1 nm and causes cardiac stimulation and cytolysis. Pore formation is a multi-step process that involves specific recognition of membrane sphingomyelin (but neither cholesterol nor phosphatidylcholine) using aromatic rich region and adjacent phosphocholine (POC) binding site, firm binding to the membrane (mainly driven by hydrophobic interactions) accompanied by the transfer of the N-terminal region to the lipid-water interface and finally pore formation after oligomerization of monomers. Cytolytic effects include red blood cells hemolysis, platelet aggregation and lysis, cytotoxic and cytostatic effects on fibroblasts. Lethality in mammals has been ascribed to severe vasospasm of coronary vessels, cardiac arrhythmia, and inotropic effects. This is Equinatoxin-1 from Actinia equina (Beadlet anemone).